Reading from the N-terminus, the 80-residue chain is Putative membrane protein insertion efficiency factor (80 aa).

The segment at 61 to 80 (KTGKDPVPDHFSLKRNQEGE) is disordered. Basic and acidic residues predominate over residues 62–80 (TGKDPVPDHFSLKRNQEGE).

This sequence belongs to the UPF0161 family.

It localises to the cell membrane. In terms of biological role, could be involved in insertion of integral membrane proteins into the membrane. This Streptococcus pneumoniae serotype 19F (strain G54) protein is Putative membrane protein insertion efficiency factor.